A 218-amino-acid polypeptide reads, in one-letter code: Dynein axonemal assembly factor 6 (218 aa).

The segment at 66 to 103 is disordered; the sequence is MGPGNIGPPKAKESKAIPEPRSDESENIWNPEEVPEGA. Over residues 75 to 89 the composition is skewed to basic and acidic residues; sequence KAKESKAIPEPRSDE.

This sequence belongs to the PIH1 family. In terms of assembly, interacts with HSPA1A/B, HSP90AA1 and DNAI2. Interacts with DNAAF2 and DNAAF4. In terms of tissue distribution, specifically expressed in testis. Detected in pachytene spermatocytes from 5 weeks of age and in pachytene and diplotene spermatocytes of adult mice. Not detected in spermatids or mature sperm.

Its subcellular location is the cytoplasm. It is found in the golgi apparatus. It localises to the trans-Golgi network. Plays a role in cytoplasmic pre-assembly of axonemal dynein. The protein is Dynein axonemal assembly factor 6 of Mus musculus (Mouse).